The sequence spans 305 residues: D-alanine--D-alanine ligase (305 aa).

The 197-residue stretch at 104 to 300 folds into the ATP-grasp domain; it reads RALFASAGIP…FPELVRWMVE (197 aa). 131–181 lines the ATP pocket; sequence LPRPFVVKPLNEGSSVGVFIVRDNQPSPLPDWPFDADEVLVESFIPGRELT. 3 residues coordinate Mg(2+): aspartate 249, glutamate 267, and asparagine 269.

Belongs to the D-alanine--D-alanine ligase family. The cofactor is Mg(2+). It depends on Mn(2+) as a cofactor.

It is found in the cytoplasm. The catalysed reaction is 2 D-alanine + ATP = D-alanyl-D-alanine + ADP + phosphate + H(+). It functions in the pathway cell wall biogenesis; peptidoglycan biosynthesis. In terms of biological role, cell wall formation. This Paramagnetospirillum magneticum (strain ATCC 700264 / AMB-1) (Magnetospirillum magneticum) protein is D-alanine--D-alanine ligase.